A 539-amino-acid chain; its full sequence is uncharacterized protein (539 aa).

Residues 316–433 form a disordered region; the sequence is AEHHHQKGKK…ATVERSSPPE (118 aa). Over residues 318-352 the composition is skewed to basic residues; the sequence is HHHQKGKKVPATHRRSSTPHARKTAGTRARTRARK. The segment covering 362-384 has biased composition (basic and acidic residues); that stretch reads KISKKDSGESKQKDETAGMERVF. A compositionally biased stretch (polar residues) spans 390–402; sequence NVRTCSSRASRTG.

This is an uncharacterized protein from Treponema pallidum (strain Nichols).